The primary structure comprises 253 residues: Glucosamine-6-phosphate deaminase (253 aa).

The active-site Proton acceptor; for enolization step is Asp67. The active-site For ring-opening step is Asn136. His138 functions as the Proton acceptor; for ring-opening step in the catalytic mechanism. Glu143 (for ring-opening step) is an active-site residue.

It belongs to the glucosamine/galactosamine-6-phosphate isomerase family. NagB subfamily.

It catalyses the reaction alpha-D-glucosamine 6-phosphate + H2O = beta-D-fructose 6-phosphate + NH4(+). It functions in the pathway amino-sugar metabolism; N-acetylneuraminate degradation; D-fructose 6-phosphate from N-acetylneuraminate: step 5/5. Catalyzes the reversible isomerization-deamination of glucosamine 6-phosphate (GlcN6P) to form fructose 6-phosphate (Fru6P) and ammonium ion. The chain is Glucosamine-6-phosphate deaminase from Thermoanaerobacter pseudethanolicus (strain ATCC 33223 / 39E) (Clostridium thermohydrosulfuricum).